The following is a 200-amino-acid chain: MSFVTENPWLMVLTIFIINICYVTFLTMRTILTLKGYRYIAASVSFLEVLVYIVGLGLVMSNLDHIQNIIAYAFGFSIGIIVGMKIEEKLALGYTVVNVTSAEYELDLPNELRNLGYGVTHYAAFGRDGSRMVMQILTPRKYERKLMDTIKNLDPKAFIIAYEPRNIHGGFWTKGIRRRKLKDYEPEELESVVEHEIQSK.

The next 3 helical transmembrane spans lie at P8–M28, I40–M60, and I66–I86.

It belongs to the UPF0316 family.

Its subcellular location is the cell membrane. The protein is UPF0316 protein SAUSA300_1892 of Staphylococcus aureus (strain USA300).